Here is an 842-residue protein sequence, read N- to C-terminus: Protein translocase subunit SecA (842 aa).

Residues Gln85, 103–107, and Asp493 each bind ATP; that span reads GEGKT. The Zn(2+) site is built by Cys825, Cys827, Cys836, and His837.

This sequence belongs to the SecA family. Monomer and homodimer. Part of the essential Sec protein translocation apparatus which comprises SecA, SecYEG and auxiliary proteins SecDF. Other proteins may also be involved. Zn(2+) is required as a cofactor.

Its subcellular location is the cell membrane. The protein localises to the cytoplasm. The enzyme catalyses ATP + H2O + cellular proteinSide 1 = ADP + phosphate + cellular proteinSide 2.. Functionally, part of the Sec protein translocase complex. Interacts with the SecYEG preprotein conducting channel. Has a central role in coupling the hydrolysis of ATP to the transfer of proteins into and across the cell membrane, serving as an ATP-driven molecular motor driving the stepwise translocation of polypeptide chains across the membrane. This is Protein translocase subunit SecA from Streptococcus equi subsp. zooepidemicus (strain MGCS10565).